Here is a 357-residue protein sequence, read N- to C-terminus: tRNA pseudouridine synthase D (357 aa).

Asp76 functions as the Nucleophile in the catalytic mechanism. Residues 151–331 (GMPNYFGYQR…DGRYKDEEAQ (181 aa)) enclose the TRUD domain.

This sequence belongs to the pseudouridine synthase TruD family.

It carries out the reaction uridine(13) in tRNA = pseudouridine(13) in tRNA. Responsible for synthesis of pseudouridine from uracil-13 in transfer RNAs. The sequence is that of tRNA pseudouridine synthase D from Sulfurimonas denitrificans (strain ATCC 33889 / DSM 1251) (Thiomicrospira denitrificans (strain ATCC 33889 / DSM 1251)).